A 75-amino-acid polypeptide reads, in one-letter code: UPF0150 protein TM_1313 (75 aa).

This sequence belongs to the UPF0150 family.

In Thermotoga maritima (strain ATCC 43589 / DSM 3109 / JCM 10099 / NBRC 100826 / MSB8), this protein is UPF0150 protein TM_1313.